The following is a 778-amino-acid chain: Endonuclease MutS2 (778 aa).

Residue 328–335 coordinates ATP; the sequence is GPNTGGKT. Residues 702–777 enclose the Smr domain; it reads LDLRGKRYEE…GSGATIVTFK (76 aa).

The protein belongs to the DNA mismatch repair MutS family. MutS2 subfamily. Homodimer. Binds to stalled ribosomes, contacting rRNA.

In terms of biological role, endonuclease that is involved in the suppression of homologous recombination and thus may have a key role in the control of bacterial genetic diversity. Functionally, acts as a ribosome collision sensor, splitting the ribosome into its 2 subunits. Detects stalled/collided 70S ribosomes which it binds and splits by an ATP-hydrolysis driven conformational change. Acts upstream of the ribosome quality control system (RQC), a ribosome-associated complex that mediates the extraction of incompletely synthesized nascent chains from stalled ribosomes and their subsequent degradation. Probably generates substrates for RQC. This chain is Endonuclease MutS2, found in Streptococcus pneumoniae serotype 2 (strain D39 / NCTC 7466).